The chain runs to 168 residues: Ubiquitin-conjugating enzyme E2 7 (168 aa).

The segment at 1–21 (MATAPARRASSSRSSSEISRT) is disordered. One can recognise a UBC core domain in the interval 6–166 (ARRASSSRSS…VRRAVRKSQE (161 aa)). The active-site Glycyl thioester intermediate is the cysteine 92.

It belongs to the ubiquitin-conjugating enzyme family.

It carries out the reaction S-ubiquitinyl-[E1 ubiquitin-activating enzyme]-L-cysteine + [E2 ubiquitin-conjugating enzyme]-L-cysteine = [E1 ubiquitin-activating enzyme]-L-cysteine + S-ubiquitinyl-[E2 ubiquitin-conjugating enzyme]-L-cysteine.. The protein operates within protein modification; protein ubiquitination. In terms of biological role, catalyzes the covalent attachment of ubiquitin to other proteins so as to signal them for selective protein degradation. Involved in the formation of multiubiquitin chains. This chain is Ubiquitin-conjugating enzyme E2 7 (UBC7), found in Triticum aestivum (Wheat).